A 328-amino-acid chain; its full sequence is Probable cell division protein WhiA (328 aa).

Positions 275 to 308 (SLEELGRLAEPPMTKDAVAGRIRRLLSMADKRAE) form a DNA-binding region, H-T-H motif.

Belongs to the WhiA family.

Involved in cell division and chromosome segregation. This chain is Probable cell division protein WhiA, found in Corynebacterium jeikeium (strain K411).